A 503-amino-acid polypeptide reads, in one-letter code: Putative cytochrome P450 71A28 (503 aa).

The helical transmembrane segment at 1 to 21 (MILISLCFTTFLAFLFLNPLL) threads the bilayer. Cys-443 contributes to the heme binding site.

This sequence belongs to the cytochrome P450 family. The cofactor is heme.

Its subcellular location is the membrane. This chain is Putative cytochrome P450 71A28 (CYP71A28), found in Arabidopsis thaliana (Mouse-ear cress).